The sequence spans 525 residues: GMP synthase [glutamine-hydrolyzing] (525 aa).

A Glutamine amidotransferase type-1 domain is found at 9–207 (RILILDFGSQ…ILDICECEAL (199 aa)). Cys-86 functions as the Nucleophile in the catalytic mechanism. Catalysis depends on residues His-181 and Glu-183. The GMPS ATP-PPase domain maps to 208-400 (WTPSKIAEDA…LGLPYDMVYR (193 aa)). Residue 235 to 241 (SGGVDSS) coordinates ATP.

As to quaternary structure, homodimer.

It catalyses the reaction XMP + L-glutamine + ATP + H2O = GMP + L-glutamate + AMP + diphosphate + 2 H(+). The protein operates within purine metabolism; GMP biosynthesis; GMP from XMP (L-Gln route): step 1/1. Its function is as follows. Catalyzes the synthesis of GMP from XMP. This Pseudomonas fluorescens (strain SBW25) protein is GMP synthase [glutamine-hydrolyzing].